The sequence spans 140 residues: Profilin-1 (140 aa).

At Ala2 the chain carries N-acetylalanine. A Phosphoserine modification is found at Ser28. Lys54 is covalently cross-linked (Glycyl lysine isopeptide (Lys-Gly) (interchain with G-Cter in SUMO2); alternate). A Glycyl lysine isopeptide (Lys-Gly) (interchain with G-Cter in ubiquitin); alternate cross-link involves residue Lys54. Ser57 bears the Phosphoserine mark. Lys108 is subject to N6-acetyllysine. Position 129 is a phosphotyrosine (Tyr129). Position 138 is a phosphoserine; by ROCK1 (Ser138).

The protein belongs to the profilin family. Found in a complex with XPO6, Ran, ACTB and PFN1. Interacts with ACTB. Interacts with VASP. Interacts with HTT. Interacts with SH3BGRL. Occurs in many kinds of cells as a complex with monomeric actin in a 1:1 ratio. Interacts with ACTMAP. Post-translationally, phosphorylation at Ser-138 reduces its affinity for G-actin and blocks its interaction with HTT, reducing its ability to inhibit androgen receptor (AR) and HTT aggregation.

Its subcellular location is the cytoplasm. The protein resides in the cytoskeleton. In terms of biological role, binds to actin and affects the structure of the cytoskeleton. At high concentrations, profilin prevents the polymerization of actin, whereas it enhances it at low concentrations. By binding to PIP2, it inhibits the formation of IP3 and DG. Inhibits androgen receptor (AR) and HTT aggregation and binding of G-actin is essential for its inhibition of AR. This Bos taurus (Bovine) protein is Profilin-1 (PFN1).